Consider the following 196-residue polypeptide: Auxin-induced protein 22B (196 aa).

Positions L18–L22 match the EAR-like (transcriptional repression) motif. The tract at residues R44–P74 is disordered. A PB1 domain is found at G99–G186.

The protein belongs to the Aux/IAA family. As to quaternary structure, homodimers and heterodimers.

The protein resides in the nucleus. Functionally, aux/IAA proteins are short-lived transcriptional factors that function as repressors of early auxin response genes at low auxin concentrations. Repression is thought to result from the interaction with auxin response factors (ARFs), proteins that bind to the auxin-responsive promoter element (AuxRE). Formation of heterodimers with ARF proteins may alter their ability to modulate early auxin response genes expression. This Vigna radiata var. radiata (Mung bean) protein is Auxin-induced protein 22B (AUX22B).